Consider the following 250-residue polypeptide: Archaeal flagellar motor scaffold protein FlaX (250 aa).

At methionine 1–serine 9 the chain is on the extracellular side. Residues serine 10–phenylalanine 30 form a helical membrane-spanning segment. Over arginine 31–glycine 250 the chain is Cytoplasmic. A compositionally biased stretch (polar residues) spans threonine 42–proline 61. Residues threonine 42–aspartate 72 form a disordered region. Over residues alanine 62 to aspartate 72 the composition is skewed to basic and acidic residues.

The S.acidocaldarius archaellum assembly machinery and its filament consist of seven proteins (FlaB, FlaF, FlaG, FlaH, FlaI, FlaJ and FlaX). FlaX assembles into ring-shaped oligomers. Interacts directly with FlaH and the motor ATPase FlaI.

Its subcellular location is the archaeal flagellum. It is found in the cell membrane. The presence of the flagellar core components FlaH, FlaI and FlaJ seems to be crucial for the stability of FlaX. In terms of biological role, component of the archaellum. FlaX, FlaH and FlaI form the core cytoplasmic motor complex of the crenarchaeal archaellum. FlaX forms a ring that may act as a membrane-bound cytoplasmic scaffold that guides the assembly of the archaellum motor complex. Is essential for archaellum assembly. This chain is Archaeal flagellar motor scaffold protein FlaX, found in Sulfolobus acidocaldarius (strain ATCC 33909 / DSM 639 / JCM 8929 / NBRC 15157 / NCIMB 11770).